Here is a 201-residue protein sequence, read N- to C-terminus: FMN-dependent NADH:quinone oxidoreductase (201 aa).

FMN contacts are provided by residues Ser-9, 16–18 (SVS), and 93–96 (MYNF).

The protein belongs to the azoreductase type 1 family. As to quaternary structure, homodimer. FMN is required as a cofactor.

It catalyses the reaction 2 a quinone + NADH + H(+) = 2 a 1,4-benzosemiquinone + NAD(+). It carries out the reaction N,N-dimethyl-1,4-phenylenediamine + anthranilate + 2 NAD(+) = 2-(4-dimethylaminophenyl)diazenylbenzoate + 2 NADH + 2 H(+). Functionally, quinone reductase that provides resistance to thiol-specific stress caused by electrophilic quinones. Also exhibits azoreductase activity. Catalyzes the reductive cleavage of the azo bond in aromatic azo compounds to the corresponding amines. This chain is FMN-dependent NADH:quinone oxidoreductase, found in Gluconacetobacter diazotrophicus (strain ATCC 49037 / DSM 5601 / CCUG 37298 / CIP 103539 / LMG 7603 / PAl5).